The chain runs to 224 residues: Ankyrin repeat domain-containing protein 45 (224 aa).

ANK repeat units lie at residues 46–76 (VGRN…DVNE) and 80–109 (RGYS…DFQA).

Widely expressed.

It localises to the cytoplasm. The protein localises to the midbody. The protein resides in the midbody ring. Its subcellular location is the cleavage furrow. Its function is as follows. May play a role during cell division. The sequence is that of Ankyrin repeat domain-containing protein 45 from Danio rerio (Zebrafish).